Reading from the N-terminus, the 249-residue chain is Putative S-adenosyl-L-methionine-dependent methyltransferase Mkms_0592 (249 aa).

S-adenosyl-L-methionine is bound by residues Asp-111 and 141–142 (DL).

This sequence belongs to the UPF0677 family.

Functionally, exhibits S-adenosyl-L-methionine-dependent methyltransferase activity. This Mycobacterium sp. (strain KMS) protein is Putative S-adenosyl-L-methionine-dependent methyltransferase Mkms_0592.